The primary structure comprises 3010 residues: MSTNPKPQRKTKRNTNRRPQDVKFPGGGQIVGGVYLLPRRGPRLGVRATRKASERSQPRGRRQPIPKARRPEGRAWAQPGYPWPLYGNEGLGWAGWLLSPRGSRPSWGPTDPRRRSRNLGKVIDTLTCGFADLMGYIPLVGAPLGGAARALAHGVRVLEDGVNYATGNLPGCSFSIFLLALLSCLTIPASAYEVRNVSGIYHVTNDCSNSSIVYEAADVIMHTPGCVPCVREGNSSRCWVALTPTLAARNASVPTTTIRRHVDLLVGTAAFCSAMYVGDLCGSIFLVSQLFTFSPRRHETVQDCNCSIYPGHVSGHRMAWDMMMNWSPTTALVVSQLLRIPQAVVDMVAGAHWGVLAGLAYYSMVGNWAKVLIVALLFAGVDGETHTTGRVAGHTTSGFTSLFSSGASQKIQLVNTNGSWHINRTALNCNDSLQTGFFAALFYAHKFNSSGCPERMASCRPIDWFAQGWGPITYTKPNSSDQRPYCWHYAPRPCGVVPASQVCGPVYCFTPSPVVVGTTDRSGVPTYSWGENETDVMLLNNTRPPQGNWFGCTWMNSTGFTKTCGGPPCNIGGVGNRTLICPTDCFRKHPEATYTKCGSGPWLTPRCLVDYPYRLWHYPCTLNFSIFKVRMYVGGVEHRLNAACNWTRGERCNLEDRDRSELSPLLLSTTEWQILPCAFTTLPALSTGLIHLHQNIVDVQYLYGVGSAFVSFAIKWEYILLLFLLLADARVCACLWMMLLIAQAEAALENLVVLNAASVAGAHGILSFLVFFCAAWYIKGRLAPGAAYAFYGVWPLLLLLLALPPRAYALDREMAASCGGAVLVGLVFLTLSPYYKVFLTRLIWWLQYFITRAEAHMQVWVPPLNVRGGRDAIILLTCAVHPELIFDITKLLLAILGPLMVLQAGITRVPYFVRAQGLIRACMLVRKVAGGHYVQMAFMKLGALTGTYVYNHLTPLRDWAHAGLRDLAVAVEPVVFSAMETKVITWGADTAACGDIILGLPVSARRGKEIFLGPADSLEGQGWRLLAPITAYSQQTRGVLGCIITSLTGRDKNQVEGEVQVVSTATQSFLATCINGVCWTVYHGAGSKTLAGPKGPITQMYTNVDLDLVGWQAPPGARSMTPCSCGSSDLYLVTRHADVIPVRRRGDSRGSLLSPRPVSYLKGSSGGPLLCPSGHVVGVFRAAVCTRGVAKAVDFIPVESMETTMRSPVFTDNSSPPAVPQTFQVAHLHAPTGSGKSTKVPAAYAAQGYKVLVLNPSVAATLGFGAYMSKAHGIDPNIRTGVRTITTGGSITYSTYGKFLADGGCSGGAYDIIICDECHSTDSTTILGIGTVLDQAETAGARLVVLATATPPGSVTVPHPNIEEIGLSNNGEIPFYGKAIPIEAIKGGRHLIFCHSKKKCDELAAKLTGLGLNAVAYYRGLDVSVIPPIGDVVVVATDALMTGFTGDFDSVIDCNTCVTQTVDFSLDPTFTIETTTVPQDAVSRSQRRGRTGRGRSGIYRFVTPGERPSGMFDSSVLCECYDAGCAWYELTPAETSVRLRAYLNTPGLPVCQDHLEFWESVFTGLTHIDAHFLSQTKQAGDNFPYLVAYQATVCARAQAPPPSWDQMWKCLIRLKPTLHGPTPLLYRLGAVQNEVILTHPITKYIMACMSADLEVVTSTWVLVGGVLAALAAYCLTTGSVVIVGRIILSGKPAVVPDREVLYQEFDEMEECASQLPYIEQGMQLAEQFKQKALGLLQTATKQAEAAAPVVESKWRALETFWAKHMWNFISGIQYLAGLSTLPGNPAIASLMAFTASITSPLTTQNTLLFNILGGWVAAQLAPPSAASAFVGAGIAGAAVGSIGLGKVLVDILAGYGAGVAGALVAFKVMSGEVPSTEDLVNLLPAILSPGALVVGVVCAAILRRHVGPGEGAVQWMNRLIAFASRGNHVSPTHYVPESDAAARVTQILSSLTITQLLKRLHQWINEDCSTPCSGSWLRDVWDWICTVLTDFKTWLQSKLLPRLPGVPFLSCQRGYKGVWRGDGIMQTTCPCGAQIAGHVKNGSMRIVGPRTCSNTWHGTFPINAYTTGPCTPSPAPNYSRALWRVAAEEYVEVTRVGDFHYVTGMTTDNVKCPCQVPAPEFFTEVDGVRLHRYAPACKPLLREDVTFQVGLNQYLVGSQLPCEPEPDVTVLTSMLTDPSHITAETAKRRLARGSPPSLASSSASQLSAPSLKATCTTHHDSPDADLIEANLLWRQEMGGNITRVESENKVVILDSFEPLHAEGDEREISVAAEILRKSRKFPSALPIWARPDYNPPLLESWKDPDYVPPVVHGCPLPPTKAPPIPPPRRKRTVVLTESNVSSALAELATKTFGSSGSSAVDSGTATALPDLASDDGDKGSDVESYSSMPPLEGEPGDPDLSDGSWSTVSEEASEDVVCCSMSYTWTGALITPCAAEESKLPINPLSNSLLRHHNMVYATTSRSASLRQKKVTFDRLQVLDDHYRDVLKEMKAKASTVKAKLLSIEEACKLTPPHSAKSKFGYGAKDVRNLSSRAVNHIRSVWEDLLEDTETPIDTTIMAKSEVFCVQPEKGGRKPARLIVFPDLGVRVCEKMALYDVVSTLPQAVMGSSYGFQYSPKQRVEFLVNTWKSKKCPMGFSYDTRCFDSTVTESDIRVEESIYQCCDLAPEARQAIRSLTERLYIGGPLTNSKGQNCGYRRCRASGVLTTSCGNTLTCYLKATAACRAAKLQDCTMLVNGDDLVVICESAGTQEDAAALRAFTEAMTRYSAPPGDPPQPEYDLELITSCSSNVSVAHDASGKRVYYLTRDPTTPLARAAWETARHTPINSWLGNIIMYAPTLWARMILMTHFFSILLAQEQLEKALDCQIYGACYSIEPLDLPQIIERLHGLSAFTLHSYSPGEINRVASCLRKLGVPPLRTWRHRARSVRAKLLSQGGRAATCGRYLFNWAVRTKLKLTPIPAASQLDLSGWFVAGYSGGDIYHSLSRARPRWFPLCLLLLSVGVGIYLLPNR.

The residue at position 2 (serine 2) is an N-acetylserine; by host. Positions 2 to 23 (STNPKPQRKTKRNTNRRPQDVK) are interaction with STAT1. The interval 2 to 58 (STNPKPQRKTKRNTNRRPQDVKFPGGGQIVGGVYLLPRRGPRLGVRATRKASERSQP) is interaction with EIF2AK2/PKR. The segment at 2–59 (STNPKPQRKTKRNTNRRPQDVKFPGGGQIVGGVYLLPRRGPRLGVRATRKASERSQPR) is interaction with DDX3X. The tract at residues 2 to 75 (STNPKPQRKT…PKARRPEGRA (74 aa)) is disordered. Over 2-168 (STNPKPQRKT…EDGVNYATGN (167 aa)) the chain is Cytoplasmic. Short sequence motifs (nuclear localization signal) lie at residues 5–13 (PKPQRKTKR) and 38–43 (PRRGPR). Residues 7-16 (PQRKTKRNTN) show a composition bias toward basic residues. Residues 32–47 (GGVYLLPRRGPRLGVR) show a composition bias toward low complexity. Phosphoserine; by host is present on serine 53. 2 short sequence motifs (nuclear localization signal) span residues 58 to 64 (PRGRRQP) and 66 to 71 (PKARRP). Basic residues predominate over residues 58–68 (PRGRRQPIPKA). The residue at position 99 (serine 99) is a Phosphoserine; by host. An important for endoplasmic reticulum and mitochondrial localization region spans residues 112–152 (PRRRSRNLGKVIDTLTCGFADLMGYIPLVGAPLGGAARALA). The residue at position 116 (serine 116) is a Phosphoserine; by host PKA. The segment at 122–173 (VIDTLTCGFADLMGYIPLVGAPLGGAARALAHGVRVLEDGVNYATGNLPGCS) is interaction with APOA2. The interval 164-167 (YATG) is important for lipid droplets localization. A helical membrane pass occupies residues 169 to 189 (LPGCSFSIFLLALLSCLTIPA). Residues 178–191 (LLALLSCLTIPASA) constitute a propeptide, ER anchor for the core protein, removed in mature form by host signal peptidase. The Lumenal portion of the chain corresponds to 190 to 358 (SAYEVRNVSG…AGAHWGVLAG (169 aa)). Asparagine 196, asparagine 209, asparagine 234, and asparagine 250 each carry an N-linked (GlcNAc...) asparagine; by host glycan. Positions 265-296 (LVGTAAFCSAMYVGDLCGSIFLVSQLFTFSPR) are important for fusion. Residue asparagine 305 is glycosylated (N-linked (GlcNAc...) asparagine; by host). Residues 359 to 379 (LAYYSMVGNWAKVLIVALLFA) traverse the membrane as a helical segment. Residues 380 to 725 (GVDGETHTTG…WEYILLLFLL (346 aa)) lie on the Lumenal side of the membrane. Positions 385–411 (THTTGRVAGHTTSGFTSLFSSGASQKI) are HVR1. Residues asparagine 417, asparagine 423, asparagine 430, and asparagine 448 are each glycosylated (N-linked (GlcNAc...) (high mannose) asparagine; by host). Cystine bridges form between cysteine 429–cysteine 552, cysteine 452–cysteine 459, cysteine 486–cysteine 494, and cysteine 503–cysteine 508. The HVR2 stretch occupies residues 474–479 (YTKPNS). Residue asparagine 478 is glycosylated (N-linked (GlcNAc...) asparagine; by host). Positions 480–493 (SDQRPYCWHYAPRP) are CD81-binding 1. Asparagine 532 carries an N-linked (GlcNAc...) (high mannose) asparagine; by host glycan. Asparagine 540 carries an N-linked (GlcNAc...) asparagine; by host glycan. A CD81-binding 2 region spans residues 544–551 (PPQGNWFG). The N-linked (GlcNAc...) (high mannose) asparagine; by host glycan is linked to asparagine 556. Cysteine 564 and cysteine 569 are joined by a disulfide. A glycan (N-linked (GlcNAc...) (high mannose) asparagine; by host) is linked at asparagine 576. 3 cysteine pairs are disulfide-bonded: cysteine 581-cysteine 585, cysteine 597-cysteine 620, and cysteine 607-cysteine 644. N-linked (GlcNAc...) (high mannose) asparagine; by host glycosylation is found at asparagine 623 and asparagine 645. Cysteine 652 and cysteine 677 are joined by a disulfide. Residues 660 to 671 (SELSPLLLSTTE) are PKR/eIF2-alpha phosphorylation homology domain (PePHD). The chain crosses the membrane as a helical span at residues 726 to 746 (LADARVCACLWMMLLIAQAEA). Over 747–757 (ALENLVVLNAA) the chain is Lumenal. The helical transmembrane segment at 758–778 (SVAGAHGILSFLVFFCAAWYI) threads the bilayer. Residues 779 to 781 (KGR) are Cytoplasmic-facing. The chain crosses the membrane as a helical span at residues 782–803 (LAPGAAYAFYGVWPLLLLLLAL). Residues 804–813 (PPRAYALDRE) are Lumenal-facing. A helical membrane pass occupies residues 814–834 (MAASCGGAVLVGLVFLTLSPY). Topologically, residues 835-838 (YKVF) are cytoplasmic. A helical transmembrane segment spans residues 839 to 859 (LTRLIWWLQYFITRAEAHMQV). The Lumenal segment spans residues 860–881 (WVPPLNVRGGRDAIILLTCAVH). Residues 882-902 (PELIFDITKLLLAILGPLMVL) traverse the membrane as a helical segment. The Peptidase C18 domain maps to 903–1026 (QAGITRVPYF…SLEGQGWRLL (124 aa)). The Cytoplasmic portion of the chain corresponds to 903–1657 (QAGITRVPYF…CMSADLEVVT (755 aa)). Residues 904–1206 (AGITRVPYFV…PVESMETTMR (303 aa)) form a protease NS2-3 region. Cysteine 922 carries S-palmitoyl cysteine; by host lipidation. The interval 929 to 949 (AGGHYVQMAFMKLGALTGTYV) is interaction with host SCPS1. Active-site for protease NS2 activity; shared with dimeric partner residues include histidine 952, glutamate 972, and cysteine 993. Positions 1027-1208 (APITAYSQQT…ESMETTMRSP (182 aa)) constitute a Peptidase S29 domain. Active-site charge relay system; for serine protease NS3 activity residues include histidine 1083 and aspartate 1107. 2 residues coordinate Zn(2+): cysteine 1123 and cysteine 1125. Serine 1165 serves as the catalytic Charge relay system; for serine protease NS3 activity. Zn(2+) is bound by residues cysteine 1171 and histidine 1175. The Helicase ATP-binding domain occupies 1217-1369 (PAVPQTFQVA…PNIEEIGLSN (153 aa)). 1230–1237 (APTGSGKS) lines the ATP pocket. The Mg(2+) site is built by serine 1237 and glutamate 1317. Positions 1316 to 1319 (DECH) match the DECH box motif. The segment at 1486–1497 (QRRGRTGRGRSG) is RNA-binding. A helical membrane pass occupies residues 1658 to 1678 (STWVLVGGVLAALAAYCLTTG). The segment at 1679-1690 (SVVIVGRIILSG) is NS3-binding. Over 1679–1805 (SVVIVGRIIL…SITSPLTTQN (127 aa)) the chain is Cytoplasmic. The helical transmembrane segment at 1806–1824 (TLLFNILGGWVAAQLAPPS) threads the bilayer. The Lumenal segment spans residues 1825–1828 (AASA). Residues 1829–1849 (FVGAGIAGAAVGSIGLGKVLV) form a helical membrane-spanning segment. A topological domain (cytoplasmic) is located at residue aspartate 1850. A helical membrane pass occupies residues 1851 to 1871 (ILAGYGAGVAGALVAFKVMSG). The Lumenal portion of the chain corresponds to 1872–1881 (EVPSTEDLVN). A helical membrane pass occupies residues 1882-1902 (LLPAILSPGALVVGVVCAAIL). Residues 1903-1972 (RRHVGPGEGA…WINEDCSTPC (70 aa)) are Cytoplasmic-facing. S-palmitoyl cysteine; by host attachment occurs at residues cysteine 1968 and cysteine 1972. The stretch at 1973 to 2002 (SGSWLRDVWDWICTVLTDFKTWLQSKLLPR) is an intramembrane region. The Cytoplasmic portion of the chain corresponds to 2003–2989 (LPGVPFLSCQ…YHSLSRARPR (987 aa)). The Zn(2+) site is built by cysteine 2011, cysteine 2029, cysteine 2031, and cysteine 2052. The interval 2120–2208 (EFFTEVDGVR…ASSSASQLSA (89 aa)) is FKBP8-binding. A transcriptional activation region spans residues 2120–2332 (EFFTEVDGVR…PIPPPRRKRT (213 aa)). An interaction with non-structural protein 4A region spans residues 2135–2139 (PACKP). The segment at 2187–2219 (KRRLARGSPPSLASSSASQLSAPSLKATCTTHH) is disordered. The tract at residues 2189–2441 (RLARGSPPSL…PCAAEESKLP (253 aa)) is interaction with host SKP2. Position 2194 is a phosphoserine; by host; in p56 (serine 2194). Over residues 2194–2211 (SPPSLASSSASQLSAPSL) the composition is skewed to low complexity. Phosphoserine; by host; in p58 is present on residues serine 2197, serine 2201, serine 2204, serine 2207, and serine 2210. An ISDR region spans residues 2210 to 2249 (SLKATCTTHHDSPDADLIEANLLWRQEMGGNITRVESENK). An interaction with EIF2AK2/PKR region spans residues 2210 to 2275 (SLKATCTTHH…REISVAAEIL (66 aa)). The NS4B-binding stretch occupies residues 2249 to 2306 (KVVILDSFEPLHAEGDEREISVAAEILRKSRKFPSALPIWARPDYNPPLLESWKDPDY). The short motif at 2322 to 2325 (PPIP) is the SH3-binding element. Positions 2326–2334 (PPRRKRTVV) match the Nuclear localization signal motif. Lysine 2350 participates in a covalent cross-link: Glycyl lysine isopeptide (Lys-Gly) (interchain with G-Cter in ubiquitin). Residues 2351-2365 (TFGSSGSSAVDSGTA) show a composition bias toward polar residues. The interval 2351–2407 (TFGSSGSSAVDSGTATALPDLASDDGDKGSDVESYSSMPPLEGEPGDPDLSDGSWST) is disordered. The segment at 2354–2377 (SSGSSAVDSGTATALPDLASDDGD) is V3. Serine 2448 and serine 2461 each carry phosphoserine; by host. Residues 2633 to 2751 (PMGFSYDTRC…ICESAGTQED (119 aa)) enclose the RdRp catalytic domain. Residues aspartate 2639, aspartate 2737, and aspartate 2738 each contribute to the Mg(2+) site. A helical membrane pass occupies residues 2990 to 3010 (WFPLCLLLLSVGVGIYLLPNR).

This sequence belongs to the hepacivirus polyprotein family. In terms of assembly, homooligomer. Interacts with E1 (via C-terminus). Interacts with the non-structural protein 5A. Interacts (via N-terminus) with host STAT1 (via SH2 domain); this interaction results in decreased STAT1 phosphorylation and ubiquitin-mediated proteasome-dependent STAT1 degradation, leading to decreased IFN-stimulated gene transcription. Interacts with host STAT3; this interaction constitutively activates STAT3. Interacts with host LTBR receptor. Interacts with host TNFRSF1A receptor and possibly induces apoptosis. Interacts with host HNRPK. Interacts with host YWHAE. Interacts with host UBE3A/E6AP. Interacts with host DDX3X. Interacts with host APOA2. Interacts with host RXRA protein. Interacts with host SP110 isoform 3/Sp110b; this interaction sequesters the transcriptional corepressor SP110 away from the nucleus. Interacts with host CREB3 nuclear transcription protein; this interaction triggers cell transformation. Interacts with host ACY3. Interacts with host C1QR1. Interacts with host RBM24; this interaction, which enhances the interaction of the mature core protein with 5'-UTR, may inhibit viral translation and favor replication. Interacts with host EIF2AK2/PKR; this interaction induces the autophosphorylation of EIF2AK2. Part of the viral assembly initiation complex composed of NS2, E1, E2, NS3, NS4A, NS5A and the mature core protein. As to quaternary structure, forms a heterodimer with envelope glycoprotein E2. Interacts with mature core protein. Interacts with protease NS2. The heterodimer E1/E2 interacts with host CLDN1; this interaction plays a role in viral entry into host cell. Interacts with host SPSB2 (via C-terminus). Part of the viral assembly initiation complex composed of NS2, E1, E2, NS3, NS4A, NS5A and the mature core protein. Interacts with host NEURL3; this interaction prevents E1 binding to glycoprotein E2. Forms a heterodimer with envelope glycoprotein E1. Interacts with host CD81 and SCARB1 receptors; these interactions play a role in viral entry into host cell. Interacts with host EIF2AK2/PKR; this interaction inhibits EIF2AK2 and probably allows the virus to evade the innate immune response. Interacts with host CD209/DC-SIGN and CLEC4M/DC-SIGNR. Interact with host SPCS1; this interaction is essential for viral particle assembly. Interacts with protease NS2. The heterodimer E1/E2 interacts with host CLDN1; this interaction plays a role in viral entry into host cell. Part of the viral assembly initiation complex composed of NS2, E1, E2, NS3, NS4A, NS5A and the mature core protein. Interacts with host SLC3A2/4F2hc; the interaction may facilitate viral entry into host cell. Interacts with human PLSCR1. In terms of assembly, homohexamer. Homoheptamer. Interacts with protease NS2. As to quaternary structure, homodimer. Interacts with host SPCS1; this interaction is essential for viral particle assembly. Interacts with envelope glycoprotein E1. Interacts with envelope glycoprotein E2. Interacts with viroporin p7. Interacts with serine protease/helicase NS3. Part of the replication complex composed of NS2, NS3, NS4A, NS4B, NS5A and the RNA-directed RNA polymerase embedded in an ER-derived membranous web. Part of the viral assembly initiation complex composed of NS2, E1, E2, NS3, NS4A, NS5A and the mature core protein. Interacts with protease NS2. Interacts with non-structural protein 4A; this interaction stabilizes the folding of NS3 serine protease. NS3-NS4A interaction is essential for NS3 activation and allows membrane anchorage of the latter. NS3/NS4A complex also prevents phosphorylation of host IRF3, thus preventing the establishment of dsRNA induced antiviral state. Interacts with host MAVS; this interaction leads to the cleavage and inhibition of host MAVS. Interacts with host TICAM1; this interaction leads to the cleavage and inhibition of host TICAM1. Interacts with host TANK-binding kinase/TBK1; this interaction results in the inhibition of the association between TBK1 and IRF3, which leads to the inhibition of IRF3 activation. Interacts with host RBM24. Part of the replication complex composed of NS2, NS3, NS4A, NS4B, NS5A and the RNA-directed RNA polymerase embedded in an ER-derived membranous web. Part of the viral assembly initiation complex composed of NS2, E1, E2, NS3, NS4A, NS5A and the mature core protein. In terms of assembly, interacts with NS3 serine protease; this interaction stabilizes the folding of NS3 serine protease. NS3-NS4A interaction is essential for NS3 activation and allows membrane anchorage of the latter. Interacts with non-structural protein 5A (via N-terminus). Part of the replication complex composed of NS2, NS3, NS4A, NS4B, NS5A and the RNA-directed RNA polymerase embedded in an ER-derived membranous web. Part of the viral assembly initiation complex composed of NS2, E1, E2, NS3, NS4A, NS5A and the mature core protein. As to quaternary structure, homomultimer. Interacts with non-structural protein NS5A. Interacts with host PLA2G4C; this interaction likely initiates the recruitment of replication complexes to lipid droplets. Interacts with host STING; this interaction disrupts the interaction between STING and TBK1 thereby suppressing the interferon signaling. Part of the replication complex composed of NS2, NS3, NS4A, NS4B, NS5A and the RNA-directed RNA polymerase embedded in an ER-derived membranous web. Monomer. Homodimer; dimerization is required for RNA-binding. Interacts with the mature core protein. Interacts (via N-terminus) with non-structural protein 4A. Interacts with non-structural protein 4B. Interacts (via region D2) with RNA-directed RNA polymerase. Part of the viral assembly initiation complex composed of NS2, E1, E2, NS3, NS4A, NS5A and the mature core protein. Part of the replication complex composed of NS2, NS3, NS4A, NS4B, NS5A and the RNA-directed RNA polymerase embedded in an ER-derived membranous web. Interacts with host GRB2. Interacts with host BIN1. Interacts with host PIK3R1. Interacts with host SRCAP. Interacts with host FKBP8. Interacts (via C-terminus) with host VAPB (via MSP domain). Interacts with host EIF2AK2/PKR; this interaction leads to disruption of EIF2AK2 dimerization by NS5A and probably allows the virus to evade the innate immune response. Interacts (via N-terminus) with host PACSIN2 (via N-terminus); this interaction attenuates protein kinase C alpha-mediated phosphorylation of PACSIN2 by disrupting the interaction between PACSIN2 and PRKCA. Interacts (via N-terminus) with host SRC kinase (via SH2 domain). Interacts with most Src-family kinases. Interacts with host IFI27 and SKP2; promotes the ubiquitin-mediated proteasomal degradation of NS5A. Interacts with host GPS2. Interacts with host TNFRSF21; this interaction allows the modulation by the virus of JNK, p38 MAPK, STAT3, and Akt signaling pathways in a DR6-dependent manner. Interacts (via N-terminus) with host CIDEB (via N-terminus); this interaction seems to regulate the association of HCV particles with APOE. Interacts with host CHKA/Choline Kinase-alpha; CHKA bridges host PI4KA and NS5A and potentiates NS5A-stimulated PI4KA activity, which then facilitates the targeting of the ternary complex to the ER for viral replication. Interacts with host SPSB2 (via C-terminus); this interaction targets NS5A for ubiquitination and degradation. Interacts with host RAB18; this interaction may promote the association of NS5A and other replicase components with lipid droplets. Interacts (via region D2) with host PPIA/CYPA; the interaction stimulates RNA-binding ability of NS5A and is dependent on the peptidyl-prolyl cis-trans isomerase activity of PPIA/CYPA. Interacts with host TRIM14; this interaction induces the degradation of NS5A. In terms of assembly, homooligomer. Interacts with non-structural protein 5A. Interacts with host VAPB. Interacts with host PRK2/PKN2. Interacts with host HNRNPA1 and SEPT6; these interactions facilitate viral replication. Part of the replication complex composed of NS2, NS3, NS4A, NS4B, NS5A and the RNA-directed RNA polymerase. It depends on Zn(2+) as a cofactor. Mg(2+) is required as a cofactor. Specific enzymatic cleavages in vivo yield mature proteins. The structural proteins, core, E1, E2 and p7 are produced by proteolytic processing by host signal peptidases. The core protein precursor is synthesized as a 23 kDa, which is retained in the ER membrane through the hydrophobic signal peptide. Cleavage by the signal peptidase releases the 21 kDa mature core protein. The cleavage of the core protein precursor occurs between aminoacids 176 and 188 but the exact cleavage site is not known. Some degraded forms of the core protein appear as well during the course of infection. The other proteins (p7, NS2, NS3, NS4A, NS4B, NS5A and NS5B) are cleaved by the viral proteases. Autoprocessing between NS2 and NS3 is mediated by the NS2 cysteine protease catalytic domain and regulated by the NS3 N-terminal domain. Post-translationally, phosphorylated by host PKC and PKA. In terms of processing, ubiquitinated; mediated by UBE3A and leading to core protein subsequent proteasomal degradation. Highly N-glycosylated. Post-translationally, palmitoylation is required for NS2/3 autoprocessing and E2 recruitment to membranes. In terms of processing, palmitoylated. This modification may play a role in its polymerization or in protein-protein interactions. Phosphorylated on serines in a basal form termed p56. p58 is a hyperphosphorylated form of p56. p56 and p58 coexist in the cell in roughly equivalent amounts. Hyperphosphorylation is dependent on the presence of NS4A. Host CSNK1A1/CKI-alpha or RPS6KB1 kinases may be responsible for NS5A phosphorylation. Post-translationally, tyrosine phosphorylation is essential for the interaction with host SRC. In terms of processing, the N-terminus is phosphorylated by host PRK2/PKN2.

Its subcellular location is the host endoplasmic reticulum membrane. The protein localises to the host mitochondrion membrane. The protein resides in the virion. It localises to the host cytoplasm. It is found in the host nucleus. Its subcellular location is the host lipid droplet. The protein localises to the virion membrane. The protein resides in the host mitochondrion. It localises to the host cell membrane. It is found in the host perinuclear region. The enzyme catalyses Hydrolysis of four peptide bonds in the viral precursor polyprotein, commonly with Asp or Glu in the P6 position, Cys or Thr in P1 and Ser or Ala in P1'.. The catalysed reaction is a ribonucleoside 5'-triphosphate + H2O = a ribonucleoside 5'-diphosphate + phosphate + H(+). It catalyses the reaction ATP + H2O = ADP + phosphate + H(+). It carries out the reaction RNA(n) + a ribonucleoside 5'-triphosphate = RNA(n+1) + diphosphate. Its activity is regulated as follows. Inhibited by the antiviral drug hexamethylene amiloride. Inhibited by amantadine. Inhibition by amantadine appears to be genotype-dependent. Also inhibited by long-alkyl-chain iminosugar derivatives. With respect to regulation, activity is up-regulated by PRK2/PKN2-mediated phosphorylation. Functionally, packages viral RNA to form a viral nucleocapsid, and promotes virion budding. Participates in the viral particle production as a result of its interaction with the non-structural protein 5A. Binds RNA and may function as a RNA chaperone to induce the RNA structural rearrangements taking place during virus replication. Modulates viral translation initiation by interacting with viral IRES and 40S ribosomal subunit. Affects various cell signaling pathways, host immunity and lipid metabolism. Prevents the establishment of cellular antiviral state by blocking the interferon-alpha/beta (IFN-alpha/beta) and IFN-gamma signaling pathways and by blocking the formation of phosphorylated STAT1 and promoting ubiquitin-mediated proteasome-dependent degradation of STAT1. Activates STAT3 leading to cellular transformation. Regulates the activity of cellular genes, including c-myc and c-fos. May repress the promoter of p53, and sequester CREB3 and SP110 isoform 3/Sp110b in the cytoplasm. Represses cell cycle negative regulating factor CDKN1A, thereby interrupting an important check point of normal cell cycle regulation. Targets transcription factors involved in the regulation of inflammatory responses and in the immune response: suppresses TNF-induced NF-kappa-B activation, and activates AP-1. Binds to dendritic cells (DCs) via C1QR1, resulting in down-regulation of T-lymphocytes proliferation. Alters lipid metabolism by interacting with hepatocellular proteins involved in lipid accumulation and storage. Induces up-regulation of FAS promoter activity, and thereby contributes to the increased triglyceride accumulation in hepatocytes (steatosis). Forms a heterodimer with envelope glycoprotein E2, which mediates virus attachment to the host cell, virion internalization through clathrin-dependent endocytosis and fusion with host membrane. Fusion with the host cell is most likely mediated by both E1 and E2, through conformational rearrangements of the heterodimer required for fusion rather than a classical class II fusion mechanism. E1/E2 heterodimer binds host apolipoproteins such as APOB and APOE thereby forming a lipo-viro-particle (LVP). APOE associated to the LVP allows the initial virus attachment to cell surface receptors such as the heparan sulfate proteoglycans (HSPGs), syndecan-1 (SDC1), syndecan-1 (SDC2), the low-density lipoprotein receptor (LDLR) and scavenger receptor class B type I (SCARB1). The cholesterol transfer activity of SCARB1 allows E2 exposure and binding of E2 to SCARB1 and the tetraspanin CD81. E1/E2 heterodimer binding on CD81 activates the epithelial growth factor receptor (EGFR) signaling pathway. Diffusion of the complex E1-E2-EGFR-SCARB1-CD81 to the cell lateral membrane allows further interaction with Claudin 1 (CLDN1) and occludin (OCLN) to finally trigger HCV entry. Its function is as follows. Forms a heterodimer with envelope glycoprotein E1, which mediates virus attachment to the host cell, virion internalization through clathrin-dependent endocytosis and fusion with host membrane. Fusion with the host cell is most likely mediated by both E1 and E2, through conformational rearrangements of the heterodimer required for fusion rather than a classical class II fusion mechanism. The interaction between envelope glycoprotein E2 and host apolipoprotein E/APOE allows the proper assembly, maturation and infectivity of the viral particles. This interaction is probably promoted via the up-regulation of cellular autophagy by the virus. E1/E2 heterodimer binds host apolipoproteins such as APOB and APOE thereby forming a lipo-viro-particle (LVP). APOE associated to the LVP allows the initial virus attachment to cell surface receptors such as the heparan sulfate proteoglycans (HSPGs), syndecan-1 (SDC1), syndecan-1 (SDC2), the low-density lipoprotein receptor (LDLR) and scavenger receptor class B type I (SCARB1). The cholesterol transfer activity of SCARB1 allows E2 exposure and binding of E2 to SCARB1 and the tetraspanin CD81. E1/E2 heterodimer binding on CD81 activates the epithelial growth factor receptor (EGFR) signaling pathway. Diffusion of the complex E1-E2-EGFR-SCARB1-CD81 to the cell lateral membrane allows further interaction with Claudin 1 (CLDN1) and occludin (OCLN) to finally trigger HCV entry. Inhibits host EIF2AK2/PKR activation, preventing the establishment of an antiviral state. Viral ligand for CD209/DC-SIGN and CLEC4M/DC-SIGNR, which are respectively found on dendritic cells (DCs), and on liver sinusoidal endothelial cells and macrophage-like cells of lymph node sinuses. These interactions allow the capture of circulating HCV particles by these cells and subsequent transmission to permissive cells. Capture of circulating HCV particles by these SIGN+ cells may facilitate virus infection of proximal hepatocytes and lymphocyte subpopulations and may be essential for the establishment of persistent infection. In terms of biological role, ion channel protein that acts as a viroporin and plays an essential role in the assembly, envelopment and secretion of viral particles. Regulates the host cell secretory pathway, which induces the intracellular retention of viral glycoproteins and favors assembly of viral particles. Creates a pore in acidic organelles and releases Ca(2+) and H(+) in the cytoplasm of infected cells, leading to a productive viral infection. High levels of cytoplasmic Ca(2+) may trigger membrane trafficking and transport of viral ER-associated proteins to viroplasms, sites of viral genome replication. This ionic imbalance induces the assembly of the inflammasome complex, which triggers the maturation of pro-IL-1beta into IL-1beta through the action of caspase-1. Targets also host mitochondria and induces mitochondrial depolarization. In addition of its role as a viroporin, acts as a lipid raft adhesion factor. Functionally, cysteine protease required for the proteolytic auto-cleavage between the non-structural proteins NS2 and NS3. The N-terminus of NS3 is required for the function of NS2 protease (active region NS2-3). Promotes the initiation of viral particle assembly by mediating the interaction between structural and non-structural proteins. Displays three enzymatic activities: serine protease with a chymotrypsin-like fold, NTPase and RNA helicase. NS3 serine protease, in association with NS4A, is responsible for the cleavages of NS3-NS4A, NS4A-NS4B, NS4B-NS5A and NS5A-NS5B. The NS3/NS4A complex prevents phosphorylation of host IRF3, thus preventing the establishment of dsRNA induced antiviral state. The NS3/NS4A complex induces host amino acid transporter component SLC3A2, thus contributing to HCV propagation. NS3 RNA helicase binds to RNA and unwinds both dsDNA and dsRNA in the 3' to 5' direction, and likely resolves RNA complicated stable secondary structures in the template strand. Binds a single ATP and catalyzes the unzipping of a single base pair of dsRNA. Inhibits host antiviral proteins TBK1 and IRF3 thereby preventing the establishment of an antiviral state. Cleaves host MAVS/CARDIF thereby preventing the establishment of an antiviral state. Cleaves host TICAM1/TRIF, thereby disrupting TLR3 signaling and preventing the establishment of an antiviral state. Its function is as follows. Induces a specific membrane alteration that serves as a scaffold for the virus replication complex. This membrane alteration gives rise to the so-called ER-derived membranous web that contains the replication complex. NS4B self-interaction contributes to its function in membranous web formation. Promotes host TRIF protein degradation in a CASP8-dependent manner thereby inhibiting host TLR3-mediated interferon signaling. Disrupts the interaction between STING and TBK1 contributing to the inhibition of interferon signaling. In terms of biological role, phosphorylated protein that is indispensable for viral replication and assembly. Both hypo- and hyperphosphorylated states are required for the viral life cycle. The hyperphosphorylated form of NS5A is an inhibitor of viral replication. Involved in RNA-binding and especially in binding to the viral genome. Zinc is essential for RNA-binding. Participates in the viral particle production as a result of its interaction with the mature viral core protein. Its interaction with host VAPB may target the viral replication complex to vesicles. Down-regulates viral IRES translation initiation. Mediates interferon resistance, presumably by interacting with and inhibiting host EIF2AK2/PKR. Prevents BIN1-induced apoptosis. Acts as a transcriptional activator of some host genes important for viral replication when localized in the nucleus. Via the interaction with host PACSIN2, modulates lipid droplet formation in order to promote virion assembly. Modulates TNFRSF21/DR6 signaling pathway for viral propagation. Functionally, RNA-dependent RNA polymerase that performs primer-template recognition and RNA synthesis during viral replication. Initiates RNA transcription/replication at a flavin adenine dinucleotide (FAD), resulting in a 5'- FAD cap on viral RNAs. In this way, recognition of viral 5' RNA by host pattern recognition receptors can be bypassed, thereby evading activation of antiviral pathways. The sequence is that of Genome polyprotein from Hepatitis C virus genotype 1b (strain HC-J4) (HCV).